The following is a 402-amino-acid chain: tRNA(Met) cytidine acetate ligase (402 aa).

ATP is bound by residues 7–20, Gly-102, Asn-171, and Arg-196; that span reads ITEY…HELH.

Belongs to the TmcAL family.

The protein localises to the cytoplasm. The enzyme catalyses cytidine(34) in elongator tRNA(Met) + acetate + ATP = N(4)-acetylcytidine(34) in elongator tRNA(Met) + AMP + diphosphate. Its function is as follows. Catalyzes the formation of N(4)-acetylcytidine (ac(4)C) at the wobble position of elongator tRNA(Met), using acetate and ATP as substrates. First activates an acetate ion to form acetyladenylate (Ac-AMP) and then transfers the acetyl group to tRNA to form ac(4)C34. The sequence is that of tRNA(Met) cytidine acetate ligase from Clostridium perfringens (strain ATCC 13124 / DSM 756 / JCM 1290 / NCIMB 6125 / NCTC 8237 / Type A).